The sequence spans 369 residues: Dual specificity protein phosphatase 1-B (369 aa).

The 118-residue stretch at 21-138 folds into the Rhodanese domain; the sequence is RAHKCLILDC…FSSQCPEFCN (118 aa). Thr-168 is subject to Phosphothreonine; by MAPK1. The 142-residue stretch at 175–316 folds into the Tyrosine-protein phosphatase domain; the sequence is GPVEILPFLY…LLQFESQVLA (142 aa). The active-site Phosphocysteine intermediate is the Cys-260.

Belongs to the protein-tyrosine phosphatase family. Non-receptor class dual specificity subfamily. In terms of processing, phosphorylated by MAPK1/ERK2 at Thr-168 and at one or more serine residues in a progesterone-dependent manner. Phosphorylation reduces its rate of degradation but does not seem to affect phosphatase activity.

It is found in the nucleus. It carries out the reaction O-phospho-L-seryl-[protein] + H2O = L-seryl-[protein] + phosphate. The catalysed reaction is O-phospho-L-threonyl-[protein] + H2O = L-threonyl-[protein] + phosphate. It catalyses the reaction O-phospho-L-tyrosyl-[protein] + H2O = L-tyrosyl-[protein] + phosphate. In terms of biological role, dual specificity phosphatase that dephosphorylates MAP kinase MAPK1/ERK2 on both 'Thr-188' and 'Tyr-190', regulating its activity during the meiotic cell cycle. This chain is Dual specificity protein phosphatase 1-B, found in Xenopus laevis (African clawed frog).